The following is a 343-amino-acid chain: MRMNFSTVLLGSSVALAAVSGAQAADAIVAAEPEPMDYVRVCDAFGIGYFYIPGTETCLKINGYARFQVSFGPDEVNKRQGWGAQGTSDWDAFSRAYIAFSAKSDTELGTLTGFFASEFNADNDSDVGDSLINLDEAYIQLGGFKAGFFYSWWDKGLNGETDSLANITEFNSIAYLYEGGAFQAGVAINELEGATTKANGIGVQGIVSATVGGVSIDLLGGYDTEVEEGAIRALVSAELGPGVFQIAGVWASDPNVYFAASEWTVATSYRYNATEKLAITPGLHYWGDYGFVSDADQWRGGLAVDYKITSGLASRVSVQYTSRDIGADTEDFVSGFVRLQRDF.

A signal peptide spans 1–17 (MRMNFSTVLLGSSVALA).

It belongs to the alphaproteobacteria porin family.

Its subcellular location is the cell outer membrane. Functionally, may act as an outer membrane pore. This Sinorhizobium fredii (strain NBRC 101917 / NGR234) protein is Putative outer membrane protein y4fJ.